We begin with the raw amino-acid sequence, 528 residues long: DEAD-box ATP-dependent RNA helicase 6 (528 aa).

2 stretches are compositionally biased toward low complexity: residues 1-15 (MNNN…PPGI) and 65-80 (QQYV…QQQQ). The tract at residues 1 to 80 (MNNNNNNRGR…GYPQQIQQQQ (80 aa)) is disordered. The Q motif motif lies at 154 to 182 (NEFEDYFLKRDLLRGIYEKGFEKPSPIQE). The 171-residue stretch at 185–355 (IPIALTGSDI…DRYLKKPYII (171 aa)) folds into the Helicase ATP-binding domain. Residue 198-205 (AKNGTGKT) participates in ATP binding. Phosphothreonine is present on Thr260. A DEAD box motif is present at residues 303–306 (DEAD). Positions 365–525 (GVTQYYAFVE…PIPSLIDKAI (161 aa)) constitute a Helicase C-terminal domain.

The protein belongs to the DEAD box helicase family. DDX6/DHH1 subfamily.

Its subcellular location is the cytoplasm. The protein resides in the P-body. It catalyses the reaction ATP + H2O = ADP + phosphate + H(+). In terms of biological role, ATP-dependent RNA helicase involved in mRNA turnover, and more specifically in mRNA decapping. This is DEAD-box ATP-dependent RNA helicase 6 (RH6) from Arabidopsis thaliana (Mouse-ear cress).